The following is a 425-amino-acid chain: Histone-binding protein RBBP4-B (425 aa).

Alanine 2 carries the post-translational modification N-acetylalanine. WD repeat units follow at residues 32 to 125 (YDLV…NHEG), 126 to 175 (EVNR…RLRG), 176 to 223 (HQKE…KTIF), 225 to 270 (GHTA…HSVD), 271 to 314 (AHTA…HSFE), 315 to 371 (SHKD…FIHG), and 372 to 404 (GHTAKISDFSWNPNEPWVICSVSEDNIMQVWQM).

Belongs to the WD repeat RBAP46/RBAP48/MSI1 family. In terms of assembly, binds directly to histone H4, probably via helix 1 of the histone fold, a region that is not accessible when histone H4 is in chromatin. Probably forms a large corepressor complex that contains ncor1, sin3a, hdac1-A and/or hdac1-B, hdac2, rbbp4-A and/or rbbp4-B and possibly rbbp7.

The protein localises to the nucleus. Its subcellular location is the chromosome. It localises to the telomere. Its function is as follows. Core histone-binding subunit that may target chromatin assembly factors, chromatin remodeling factors and histone deacetylases to their histone substrates in a manner that is regulated by nucleosomal DNA. Component of several complexes which regulate chromatin metabolism. The protein is Histone-binding protein RBBP4-B (rbbp4-b) of Xenopus laevis (African clawed frog).